The chain runs to 870 residues: Leucine--tRNA ligase (870 aa).

A 'HIGH' region motif is present at residues 43–53 (PYPSGRLHMGH). A 'KMSKS' region motif is present at residues 626–630 (KMSKS). K629 contacts ATP.

It belongs to the class-I aminoacyl-tRNA synthetase family.

The protein localises to the cytoplasm. The catalysed reaction is tRNA(Leu) + L-leucine + ATP = L-leucyl-tRNA(Leu) + AMP + diphosphate. The polypeptide is Leucine--tRNA ligase (Pseudoalteromonas atlantica (strain T6c / ATCC BAA-1087)).